The following is a 167-amino-acid chain: Crossover junction endodeoxyribonuclease RuvC (167 aa).

Active-site residues include aspartate 11, glutamate 71, and aspartate 143. Residues aspartate 11, glutamate 71, and aspartate 143 each contribute to the Mg(2+) site.

This sequence belongs to the RuvC family. In terms of assembly, homodimer which binds Holliday junction (HJ) DNA. The HJ becomes 2-fold symmetrical on binding to RuvC with unstacked arms; it has a different conformation from HJ DNA in complex with RuvA. In the full resolvosome a probable DNA-RuvA(4)-RuvB(12)-RuvC(2) complex forms which resolves the HJ. The cofactor is Mg(2+).

It is found in the cytoplasm. The catalysed reaction is Endonucleolytic cleavage at a junction such as a reciprocal single-stranded crossover between two homologous DNA duplexes (Holliday junction).. The RuvA-RuvB-RuvC complex processes Holliday junction (HJ) DNA during genetic recombination and DNA repair. Endonuclease that resolves HJ intermediates. Cleaves cruciform DNA by making single-stranded nicks across the HJ at symmetrical positions within the homologous arms, yielding a 5'-phosphate and a 3'-hydroxyl group; requires a central core of homology in the junction. The consensus cleavage sequence is 5'-(A/T)TT(C/G)-3'. Cleavage occurs on the 3'-side of the TT dinucleotide at the point of strand exchange. HJ branch migration catalyzed by RuvA-RuvB allows RuvC to scan DNA until it finds its consensus sequence, where it cleaves and resolves the cruciform DNA. This chain is Crossover junction endodeoxyribonuclease RuvC, found in Acidiphilium cryptum (strain JF-5).